The following is a 497-amino-acid chain: Bypass of stop codon protein 6 (497 aa).

Residues 1–72 are Lumenal-facing; sequence MDASSVPPKV…KVKTYPLNYQ (72 aa). A phosphoserine mark is found at Ser-37 and Ser-41. N-linked (GlcNAc...) asparagine glycosylation occurs at Asn-49. The helical transmembrane segment at 73–93 threads the bilayer; that stretch reads TVPLVKLQVIACLIMFVVFGM. Residues 94-144 are Cytoplasmic-facing; that stretch reads NDQTVGALLPTLIEYYHISRVDVSNVFIVQLCGYVMASLSKERLNKHFGMR. Residues 145–165 form a helical membrane-spanning segment; the sequence is GGMLLAAGLCIVFLIILATAP. At 166–167 the chain is on the lumenal side; sequence SS. A helical membrane pass occupies residues 168–188; that stretch reads FYVCMFCGLPLGLGIGILDST. Residues 189–205 are Cytoplasmic-facing; that stretch reads GNVLMGSLLVHKNELMG. Residues 206-226 form a helical membrane-spanning segment; that stretch reads IMHGLYGAAAMVTPPLVSYFV. Residues 227–232 lie on the Lumenal side of the membrane; the sequence is EWGHWS. The helical transmembrane segment at 233–253 threads the bilayer; the sequence is LFFLIPLFFSIIGMIVIFPAF. Topologically, residues 254–300 are cytoplasmic; the sequence is KFETASKYDYLCSVENKESNNDVEEAGDNSLMESTKASPGFFELLRN. A helical membrane pass occupies residues 301 to 321; the sequence is PAIFLYSLYLFLYLGAEITTG. Residues 322-340 lie on the Lumenal side of the membrane; the sequence is SWFFSYLLETKSSNKVAMS. A helical transmembrane segment spans residues 341–361; that stretch reads YIAASFWTGLTVGRLCLGFVT. Topologically, residues 362–373 are cytoplasmic; the sequence is ERFFENEYKASK. A helical transmembrane segment spans residues 374–394; sequence AYAFLTLSSYTLFVLVGLINS. Residues 395 to 397 lie on the Lumenal side of the membrane; sequence SSV. Residues 398 to 418 traverse the membrane as a helical segment; it reads FYFVVLFFVVFCCGTFIGPLF. Over 419-439 the chain is Cytoplasmic; sequence PNASIVALQVLPKRLHVSGVG. Residues 440-460 form a helical membrane-spanning segment; the sequence is VAVAVGGCGGAAIPYLAGVIA. Over 461 to 462 the chain is Lumenal; the sequence is HT. A helical transmembrane segment spans residues 463–483; that stretch reads VGIQYIPLLCWIMVALFTLEW. The Cytoplasmic segment spans residues 484-497; the sequence is TLYPKFIKGHEEYF.

Belongs to the major facilitator superfamily.

It localises to the golgi apparatus. The protein localises to the cis-Golgi network membrane. Functionally, probable transporter. This chain is Bypass of stop codon protein 6 (BSC6), found in Saccharomyces cerevisiae (strain ATCC 204508 / S288c) (Baker's yeast).